A 363-amino-acid chain; its full sequence is 3-isopropylmalate dehydrogenase (363 aa).

78-91 (GKKWDDLPINQRPE) contacts NAD(+). Substrate-binding residues include arginine 99, arginine 109, arginine 138, and aspartate 227. Aspartate 227, aspartate 251, and aspartate 255 together coordinate Mg(2+). 285-297 (GSAPDIEGKNIAN) is an NAD(+) binding site.

The protein belongs to the isocitrate and isopropylmalate dehydrogenases family. LeuB type 1 subfamily. In terms of assembly, homodimer. The cofactor is Mg(2+). Requires Mn(2+) as cofactor.

The protein localises to the cytoplasm. It catalyses the reaction (2R,3S)-3-isopropylmalate + NAD(+) = 4-methyl-2-oxopentanoate + CO2 + NADH. It functions in the pathway amino-acid biosynthesis; L-leucine biosynthesis; L-leucine from 3-methyl-2-oxobutanoate: step 3/4. Functionally, catalyzes the oxidation of 3-carboxy-2-hydroxy-4-methylpentanoate (3-isopropylmalate) to 3-carboxy-4-methyl-2-oxopentanoate. The product decarboxylates to 4-methyl-2 oxopentanoate. In Buchnera aphidicola subsp. Uroleucon rudbeckiae, this protein is 3-isopropylmalate dehydrogenase.